The sequence spans 742 residues: Ferric enterobactin receptor PirA (742 aa).

An N-terminal signal peptide occupies residues 1–28 (MYPQFRRGHLAAAVLFASSSLLGGQALA). The TBDR plug domain occupies 57–184 (QELKQAPGVS…AGGVVNIITK (128 aa)). Disordered regions lie at residues 91–112 (GVNL…IDIR) and 409–435 (SSLK…PKSK). Residues 94–108 (LTGNSSSGQRGNNRQ) are compositionally biased toward polar residues. The 554-residue stretch at 189 to 742 (RLRGSMTVFT…AYYVSMTTSF (554 aa)) folds into the TBDR beta-barrel domain. A disulfide bridge connects residues C516 and C525. The short motif at 725 to 742 (ATYNEPGRAYYVSMTTSF) is the TonB C-terminal box element.

This sequence belongs to the TonB-dependent receptor family.

Its subcellular location is the cell outer membrane. Functionally, specific receptor for the siderophore ferric enterobactin. Probably involved in the transport of siderophores, including host catecholamines such as L-DOPA. This is Ferric enterobactin receptor PirA from Pseudomonas aeruginosa (strain ATCC 15692 / DSM 22644 / CIP 104116 / JCM 14847 / LMG 12228 / 1C / PRS 101 / PAO1).